The primary structure comprises 63 residues: Keratin-associated protein 8-1 (63 aa).

Residues P12 to Y54 are 12 X 2 AA repeats of G-[YCGS].

Belongs to the KRTAP type 8 family. As to quaternary structure, interacts with hair keratins. As to expression, is essentially restricted to only one vertical half of the hair forming compartment and in beard hairs is absent from the central medulla.

Functionally, in the hair cortex, hair keratin intermediate filaments are embedded in an interfilamentous matrix, consisting of hair keratin-associated proteins (KRTAP), which are essential for the formation of a rigid and resistant hair shaft through their extensive disulfide bond cross-linking with abundant cysteine residues of hair keratins. The matrix proteins include the high-sulfur and high-glycine-tyrosine keratins. This is Keratin-associated protein 8-1 (KRTAP8-1) from Homo sapiens (Human).